Reading from the N-terminus, the 51-residue chain is Insulin (51 aa).

3 cysteine pairs are disulfide-bonded: Cys-7–Cys-37, Cys-19–Cys-50, and Cys-36–Cys-41.

Belongs to the insulin family. Heterodimer of a B chain and an A chain linked by two disulfide bonds.

Its subcellular location is the secreted. In terms of biological role, insulin decreases blood glucose concentration. It increases cell permeability to monosaccharides, amino acids and fatty acids. It accelerates glycolysis, the pentose phosphate cycle, and glycogen synthesis in liver. The polypeptide is Insulin (INS) (Capra hircus (Goat)).